The sequence spans 412 residues: Isocitrate dehydrogenase [NADP] cytoplasmic (412 aa).

NADP(+) contacts are provided by residues 76–78 (TIT) and arginine 83. Threonine 78 lines the substrate pocket. Residues 95–101 (SPNGTIR), arginine 110, and arginine 133 contribute to the substrate site. Residue aspartate 253 coordinates Mn(2+). Lysine 261 provides a ligand contact to NADP(+). A Mn(2+)-binding site is contributed by aspartate 276. NADP(+)-binding positions include 309 to 314 (GTVTRH) and asparagine 327.

The protein belongs to the isocitrate and isopropylmalate dehydrogenases family. As to quaternary structure, homodimer. Mg(2+) serves as cofactor. Mn(2+) is required as a cofactor.

The protein resides in the cytoplasm. The catalysed reaction is D-threo-isocitrate + NADP(+) = 2-oxoglutarate + CO2 + NADPH. The polypeptide is Isocitrate dehydrogenase [NADP] cytoplasmic (idhC) (Dictyostelium discoideum (Social amoeba)).